The chain runs to 86 residues: Large ribosomal subunit protein bL27 (86 aa).

Over residues methionine 1–threonine 10 the composition is skewed to gly residues. Residues methionine 1–glycine 22 form a disordered region.

This sequence belongs to the bacterial ribosomal protein bL27 family.

This is Large ribosomal subunit protein bL27 from Polynucleobacter asymbioticus (strain DSM 18221 / CIP 109841 / QLW-P1DMWA-1) (Polynucleobacter necessarius subsp. asymbioticus).